A 403-amino-acid polypeptide reads, in one-letter code: D-galactonate dehydratase family member Mmwyl1_0037 (403 aa).

Residues asparagine 37 and histidine 122 each coordinate substrate. Catalysis depends on tyrosine 159, which acts as the Proton donor/acceptor. Aspartate 211 lines the Mg(2+) pocket. Catalysis depends on histidine 213, which acts as the Proton donor/acceptor. Residues glutamate 237 and glutamate 263 each coordinate Mg(2+). Substrate contacts are provided by glutamate 263, arginine 284, histidine 313, aspartate 317, and glutamate 340.

It belongs to the mandelate racemase/muconate lactonizing enzyme family. GalD subfamily. Requires Mg(2+) as cofactor.

The enzyme catalyses D-mannonate = 2-dehydro-3-deoxy-D-gluconate + H2O. Its function is as follows. Has low D-mannonate dehydratase activity (in vitro), suggesting that this is not a physiological substrate and that it has no significant role in D-mannonate degradation in vivo. Has no detectable activity with a panel of 70 other acid sugars (in vitro). This chain is D-galactonate dehydratase family member Mmwyl1_0037, found in Marinomonas sp. (strain MWYL1).